The primary structure comprises 617 residues: LEAF RUST 10 DISEASE-RESISTANCE LOCUS RECEPTOR-LIKE PROTEIN KINASE-like 2.4 (617 aa).

Residues 1-26 (MYYLPSSCLVLFLFFSLFYHLPCASS) form the signal peptide. Over 27–243 (KQTLGWCESQ…LPTRLSSEAK (217 aa)) the chain is Extracellular. N41, N69, N86, N112, and N184 each carry an N-linked (GlcNAc...) asparagine glycan. A helical transmembrane segment spans residues 244-264 (IATIAGVSLLPFLVLTLVVHI). Residues 265-617 (IRKQKTSNDK…SEENSISSEI (353 aa)) lie on the Cytoplasmic side of the membrane. In terms of domain architecture, Protein kinase spans 307 to 594 (NSFAEVVGRG…ALEVPPRPVL (288 aa)). ATP contacts are provided by residues 313-321 (VGRGGFGIV) and K335. Y380 is subject to Phosphotyrosine. The Proton acceptor role is filled by D431. A phosphothreonine mark is found at T468 and T471.

It belongs to the protein kinase superfamily. Ser/Thr protein kinase family.

It localises to the membrane. It catalyses the reaction L-seryl-[protein] + ATP = O-phospho-L-seryl-[protein] + ADP + H(+). The enzyme catalyses L-threonyl-[protein] + ATP = O-phospho-L-threonyl-[protein] + ADP + H(+). The sequence is that of LEAF RUST 10 DISEASE-RESISTANCE LOCUS RECEPTOR-LIKE PROTEIN KINASE-like 2.4 from Arabidopsis thaliana (Mouse-ear cress).